The following is a 438-amino-acid chain: Trigger factor (438 aa).

The region spanning 160-245 (DDKVTIDFVG…VKKIQQAELP (86 aa)) is the PPIase FKBP-type domain.

Belongs to the FKBP-type PPIase family. Tig subfamily.

The protein resides in the cytoplasm. The enzyme catalyses [protein]-peptidylproline (omega=180) = [protein]-peptidylproline (omega=0). Functionally, involved in protein export. Acts as a chaperone by maintaining the newly synthesized protein in an open conformation. Functions as a peptidyl-prolyl cis-trans isomerase. This is Trigger factor from Francisella tularensis subsp. holarctica (strain OSU18).